A 258-amino-acid chain; its full sequence is Indole-3-glycerol phosphate synthase (258 aa).

The protein belongs to the TrpC family.

The catalysed reaction is 1-(2-carboxyphenylamino)-1-deoxy-D-ribulose 5-phosphate + H(+) = (1S,2R)-1-C-(indol-3-yl)glycerol 3-phosphate + CO2 + H2O. The protein operates within amino-acid biosynthesis; L-tryptophan biosynthesis; L-tryptophan from chorismate: step 4/5. In Legionella pneumophila (strain Paris), this protein is Indole-3-glycerol phosphate synthase.